We begin with the raw amino-acid sequence, 198 residues long: Small ribosomal subunit protein uS4 (198 aa).

One can recognise an S4 RNA-binding domain in the interval 90-152; the sequence is TRLDNLVLRA…SRSNELFKEN (63 aa).

It belongs to the universal ribosomal protein uS4 family. As to quaternary structure, part of the 30S ribosomal subunit. Contacts protein S5. The interaction surface between S4 and S5 is involved in control of translational fidelity.

Functionally, one of the primary rRNA binding proteins, it binds directly to 16S rRNA where it nucleates assembly of the body of the 30S subunit. Its function is as follows. With S5 and S12 plays an important role in translational accuracy. The sequence is that of Small ribosomal subunit protein uS4 from Finegoldia magna (strain ATCC 29328 / DSM 20472 / WAL 2508) (Peptostreptococcus magnus).